Reading from the N-terminus, the 1697-residue chain is Phosphatidylinositol 3-kinase 3 (1697 aa).

Disordered regions lie at residues 57 to 91 (RSIN…TQPC), 169 to 229 (INNN…DSSI), 244 to 279 (KTTE…ENEI), 310 to 376 (KKNN…NSVG), 398 to 428 (SWTS…SGSS), and 440 to 504 (DLLK…NNDE). Low complexity-rich tracts occupy residues 60 to 87 (NNNN…NNNN), 170 to 196 (NNNN…NNNN), and 212 to 222 (NNNSNNNNNIN). Low complexity-rich tracts occupy residues 312–374 (NNNN…TTNS) and 398–408 (SWTSSKPTSSS). Polar residues-rich tracts occupy residues 409 to 428 (IGFA…SGSS) and 444 to 456 (SPSS…SDIF). A compositionally biased stretch (low complexity) spans 457-503 (NENNNNNNNNNNNNNNNNNNNNNNNNNNNNNNNNEELINNNNNNNND). The PI3K-RBD domain occupies 737-823 (PEFFVIRVHL…KGEIDLTMVE (87 aa)). Positions 888-1036 (VTENLQVRLL…QAIIIAFEFK (149 aa)) constitute a C2 PI3K-type domain. The region spanning 1060-1238 (GNELPVVTME…RVLSSGFLRY (179 aa)) is the PIK helical domain. Positions 1304 to 1581 (IPEKCKSMDS…LIHESIGTLT (278 aa)) constitute a PI3K/PI4K catalytic domain. The tract at residues 1310–1316 (SMDSAKV) is G-loop. The interval 1447–1455 (GIGDRHNDN) is catalytic loop. Positions 1466-1492 (HIDFGHFLGNFKTFAGFQREKAPFVLT) are activation loop. A compositionally biased stretch (low complexity) spans 1609-1625 (ASSLNLNKNKPSSQSKL). Positions 1609 to 1697 (ASSLNLNKNK…DTEKENSIDK (89 aa)) are disordered. 5 consecutive repeat copies span residues 1622 to 1626 (QSKLD), 1627 to 1631 (LSRSD), 1632 to 1636 (LSRSD), 1642 to 1646 (SSRLD), and 1647 to 1651 (LSRSD). The interval 1622-1651 (QSKLDLSRSDLSRSDSSRSDSSRLDLSRSD) is 5 X 5 AA approximate repeats. Basic and acidic residues-rich tracts occupy residues 1626–1681 (DLSR…DKDN) and 1688–1697 (DTEKENSIDK). The tract at residues 1659–1672 (KEKEKEKEKEKEKE) is 7 X 2 AA tandem repeats of K-E.

This sequence belongs to the PI3/PI4-kinase family.

The catalysed reaction is a 1,2-diacyl-sn-glycero-3-phospho-(1D-myo-inositol) + ATP = a 1,2-diacyl-sn-glycero-3-phospho-(1D-myo-inositol-3-phosphate) + ADP + H(+). The chain is Phosphatidylinositol 3-kinase 3 (pikC) from Dictyostelium discoideum (Social amoeba).